The chain runs to 678 residues: ERAD-associated E3 ubiquitin-protein ligase component HRD3A (678 aa).

The signal sequence occupies residues 1 to 25 (MRILSYGIVILSLLVFSFIEFGVHA). The tract at residues 40–71 (GGDDNGVGESSDFDEFGESEPKSEEELDPGSW) is disordered. Sel1-like repeat units lie at residues 124 to 159 (PHAQ…AGGN), 242 to 277 (ANAM…VDKG), 279 to 313 (PRSM…AKEG), 317 to 349 (AFNG…AVDN), 353 to 386 (SGHY…ANAG), 388 to 422 (PKAF…AERG), 506 to 537 (AALL…AKSQ), and 540 to 568 (AQAM…RYYD). N-linked (GlcNAc...) asparagine glycans are attached at residues Asn298 and Asn335. Residues 620–640 (VVFEEGNATILTLFVCLITIL) form a helical membrane-spanning segment.

Belongs to the sel-1 family. As to quaternary structure, interacts with OS9.

It localises to the endoplasmic reticulum membrane. Component of the endoplasmic reticulum (ER) quality control system called ER-associated degradation (ERAD) and involved in ubiquitin-dependent degradation of misfolded endoplasmic reticulum proteins. Functions as an ERAD substrate-recruiting factor that recognizes misfolded proteins for the HRD1 E3 ubiquitin ligase complex. Targets the misfolded LRR receptor kinase BRI1. The protein is ERAD-associated E3 ubiquitin-protein ligase component HRD3A of Arabidopsis thaliana (Mouse-ear cress).